Here is a 186-residue protein sequence, read N- to C-terminus: Ribosome-recycling factor (186 aa).

Belongs to the RRF family.

It localises to the cytoplasm. Responsible for the release of ribosomes from messenger RNA at the termination of protein biosynthesis. May increase the efficiency of translation by recycling ribosomes from one round of translation to another. The chain is Ribosome-recycling factor from Brucella melitensis biotype 2 (strain ATCC 23457).